A 574-amino-acid chain; its full sequence is MKFPWKVFKTTLLLLLLSHSLASVPSEDQPGDSYSHGQSCLGCVVLVSVIEQLAEVHNSSVQVAMERLCSYLPEKLFLKTACYFLVQTFGSDIIKLLDEAMKADVVCYALEFCKRGAVQPQCHLYPLPQEAWESALEKARQVLRRSSTMKYPRSGRNICSLPFLTKICQKIELSIKKAVPFKDIDSDKHSVFPTLRGYHWRGRDCNDSDKTVYPGRRPDNWDIHQDSNCNGIWGIDPKDGIPYEKKFCEGSQPRGIILLGDSAGAHFHIPPEWLTASQMSVNSFLNLPSALTDELNWPQLSGVTGFLDSTSGIEEKSIYHRLRKRNHCNHRDYQSISKNGASSRNLKNFIESLSRNQASDHPAIVLYAMIGNDVCNSKADTVPEMTTPEQMYANVMQTLTHLNSHLPNGSHVILYGLPDGTFLWDSLHNRYHPLGQLNKDVTYAQFFSFLRCLQLNPCNGWMSSNKTLRTLTSERAEQLSNTLKKIATTETFANFDLFYVDFAFHEIIEDWQKRGGQPWQLIEPVDGFHPNEVASLLQANRVWEKIQLQWPHVLGKENPFNSQIEEVFGDQGGH.

An N-terminal signal peptide occupies residues 1 to 22; sequence MKFPWKVFKTTLLLLLLSHSLA. The propeptide occupies 23–33; the sequence is SVPSEDQPGDS. Residues 36-117 form the Saposin B-type domain; that stretch reads HGQSCLGCVV…YALEFCKRGA (82 aa). The tract at residues 37–69 is important for enzyme activity, localization to cytoplasmic vesicles, and protein stability; it reads GQSCLGCVVLVSVIEQLAEVHNSSVQVAMERLC. Intrachain disulfides connect cysteine 40-cysteine 113, cysteine 43-cysteine 107, cysteine 69-cysteine 82, cysteine 122-cysteine 452, cysteine 159-cysteine 168, cysteine 205-cysteine 229, cysteine 248-cysteine 328, and cysteine 375-cysteine 458. An N-linked (GlcNAc...) asparagine glycan is attached at asparagine 58. Residues 172-176 are lipopolysaccharide binding; the sequence is ELSIK. Aspartate 183, aspartate 185, aspartate 187, histidine 189, aspartate 204, asparagine 206, aspartate 207, aspartate 209, valine 212, aspartate 222, aspartate 226, asparagine 228, asparagine 230, isoleucine 232, and glutamate 244 together coordinate Ca(2+). The N-linked (GlcNAc...) asparagine glycan is linked to asparagine 206. Serine 262 is an active-site residue. N-linked (GlcNAc...) asparagine glycosylation is found at asparagine 408 and asparagine 465.

As to quaternary structure, heterodimer of the large and small subunits; disulfide-linked. The cofactor is Ca(2+). Post-translationally, cleaved into a large and a small subunit. The small subunit is N-glycosylated. In terms of tissue distribution, detected in peritoneal macrophages (at protein level). Strongly expressed in kidney cortex, where it may be produced by proximal tubule cells. In liver, expressed at high levels in Kupffer cells. Expressed by dendritic cells. Detected at low levels in alveolar macrophages.

Its subcellular location is the secreted. The protein localises to the cytoplasmic vesicle. The enzyme catalyses a 3-(acyloxy)acyl derivative of bacterial toxin + H2O = a 3-hydroxyacyl derivative of bacterial toxin + a fatty acid + H(+). Its function is as follows. Removes the secondary (acyloxyacyl-linked) fatty acyl chains from the lipid A region of bacterial lipopolysaccharides (LPS). By breaking down LPS, terminates the host response to bacterial infection and prevents prolonged and damaging inflammatory responses. In peritoneal macrophages, seems to be important for recovery from a state of immune tolerance following infection by Gram-negative bacteria. This chain is Acyloxyacyl hydrolase, found in Mus musculus (Mouse).